The sequence spans 195 residues: Transcription factor LBX2 (195 aa).

Disordered stretches follow at residues 1-89 (MNSV…KSRT) and 164-195 (PALPDSTSSPDPGPSGPDSEPNLSDEEIQVDD). A DNA-binding region (homeobox) is located at residues 84 to 143 (RRKSRTAFTAQQVLELERRFVFQKYLAPSERDGLAARLGLANAQVVTWFQNRRAKLKRDV). Positions 186–195 (LSDEEIQVDD) are enriched in acidic residues.

In terms of tissue distribution, expressed in the developing urogenital system, eye and brain.

It localises to the nucleus. Its function is as follows. Transcription factor. This is Transcription factor LBX2 (Lbx2) from Mus musculus (Mouse).